A 278-amino-acid polypeptide reads, in one-letter code: Urease accessory protein UreD (278 aa).

The protein belongs to the UreD family. UreD, UreF and UreG form a complex that acts as a GTP-hydrolysis-dependent molecular chaperone, activating the urease apoprotein by helping to assemble the nickel containing metallocenter of UreC. The UreE protein probably delivers the nickel.

The protein localises to the cytoplasm. Functionally, required for maturation of urease via the functional incorporation of the urease nickel metallocenter. The protein is Urease accessory protein UreD of Blochmanniella pennsylvanica (strain BPEN).